Consider the following 290-residue polypeptide: Arylamine N-acetyltransferase 2 (290 aa).

Residue Cys-68 is the Acyl-thioester intermediate of the active site. 2 residues coordinate CoA: Ser-103 and Gly-104. 106–107 (IH) lines the substrate pocket. Residues His-107 and Asp-122 contribute to the active site. Tyr-208 contributes to the CoA binding site.

It belongs to the arylamine N-acetyltransferase family.

The protein resides in the cytoplasm. It carries out the reaction an arylamine + acetyl-CoA = an N-acetylarylamine + CoA. The enzyme catalyses an N-hydroxyarylamine + acetyl-CoA = an N-acetoxyarylamine + CoA. Functionally, catalyzes the N- or O-acetylation of various arylamine and heterocyclic amine substrates. Participates in the detoxification of a plethora of hydrazine and arylamine drugs. The sequence is that of Arylamine N-acetyltransferase 2 (Nat2) from Rattus norvegicus (Rat).